The following is a 428-amino-acid chain: Probable protein phosphatase 2C 12 (428 aa).

The 270-residue stretch at K24–I293 folds into the PPM-type phosphatase domain. The Mn(2+) site is built by D69, G70, D245, and D284. The tract at residues A301–K331 is disordered.

The protein belongs to the PP2C family. Requires Mg(2+) as cofactor. It depends on Mn(2+) as a cofactor.

It catalyses the reaction O-phospho-L-seryl-[protein] + H2O = L-seryl-[protein] + phosphate. It carries out the reaction O-phospho-L-threonyl-[protein] + H2O = L-threonyl-[protein] + phosphate. The sequence is that of Probable protein phosphatase 2C 12 from Arabidopsis thaliana (Mouse-ear cress).